A 692-amino-acid chain; its full sequence is Elongation factor G (692 aa).

One can recognise a tr-type G domain in the interval 8-283 (NRIRNIGIAA…AVIDYLPAPT (276 aa)). Residues 17–24 (AHIDAGKT), 81–85 (DTPGH), and 135–138 (NKMD) each bind GTP.

Belongs to the TRAFAC class translation factor GTPase superfamily. Classic translation factor GTPase family. EF-G/EF-2 subfamily.

The protein resides in the cytoplasm. Catalyzes the GTP-dependent ribosomal translocation step during translation elongation. During this step, the ribosome changes from the pre-translocational (PRE) to the post-translocational (POST) state as the newly formed A-site-bound peptidyl-tRNA and P-site-bound deacylated tRNA move to the P and E sites, respectively. Catalyzes the coordinated movement of the two tRNA molecules, the mRNA and conformational changes in the ribosome. This Helicobacter pylori (strain G27) protein is Elongation factor G.